Consider the following 159-residue polypeptide: NADH-quinone oxidoreductase subunit I (159 aa).

4Fe-4S ferredoxin-type domains follow at residues 51 to 80 (RRYE…IEAD) and 90 to 119 (TRYD…EGPN). 8 residues coordinate [4Fe-4S] cluster: Cys-60, Cys-63, Cys-66, Cys-70, Cys-99, Cys-102, Cys-105, and Cys-109.

It belongs to the complex I 23 kDa subunit family. In terms of assembly, NDH-1 is composed of 14 different subunits. Subunits NuoA, H, J, K, L, M, N constitute the membrane sector of the complex. The cofactor is [4Fe-4S] cluster.

Its subcellular location is the cell inner membrane. The catalysed reaction is a quinone + NADH + 5 H(+)(in) = a quinol + NAD(+) + 4 H(+)(out). In terms of biological role, NDH-1 shuttles electrons from NADH, via FMN and iron-sulfur (Fe-S) centers, to quinones in the respiratory chain. The immediate electron acceptor for the enzyme in this species is believed to be ubiquinone. Couples the redox reaction to proton translocation (for every two electrons transferred, four hydrogen ions are translocated across the cytoplasmic membrane), and thus conserves the redox energy in a proton gradient. The chain is NADH-quinone oxidoreductase subunit I from Rickettsia massiliae (strain Mtu5).